The following is a 314-amino-acid chain: Caspase-like protein (314 aa).

This sequence belongs to the peptidase C14A family.

Its function is as follows. May be involved in viral replication. The sequence is that of Caspase-like protein from Heliothis virescens ascovirus 3e (HvAV-3e).